We begin with the raw amino-acid sequence, 236 residues long: uncharacterized protein (236 aa).

An N-terminal signal peptide occupies residues 1–22 (MEFKMQKIILGMLVVTASNAMA).

This is an uncharacterized protein from Pasteurella multocida (strain Pm70).